A 202-amino-acid chain; its full sequence is Large ribosomal subunit protein bL25 (202 aa).

Belongs to the bacterial ribosomal protein bL25 family. CTC subfamily. As to quaternary structure, part of the 50S ribosomal subunit; part of the 5S rRNA/L5/L18/L25 subcomplex. Contacts the 5S rRNA. Binds to the 5S rRNA independently of L5 and L18.

Functionally, this is one of the proteins that binds to the 5S RNA in the ribosome where it forms part of the central protuberance. This chain is Large ribosomal subunit protein bL25, found in Corynebacterium efficiens (strain DSM 44549 / YS-314 / AJ 12310 / JCM 11189 / NBRC 100395).